We begin with the raw amino-acid sequence, 505 residues long: Tyrosine-protein kinase FRK (505 aa).

Residues S37 and S40 each carry the phosphoserine modification. The 69-residue stretch at 42–110 (RHGHYFVALF…PSNYVAEDRS (69 aa)) folds into the SH3 domain. An SH2 domain is found at 116–208 (WFFGAIGRSD…GLCVKLGKPC (93 aa)). Position 178 is a phosphothreonine (T178). One can recognise a Protein kinase domain in the interval 234 to 491 (IQLLKRLGSG…TLRWKLEDYF (258 aa)). ATP contacts are provided by residues 240 to 248 (LGSGQFGEV) and K262. D354 (proton acceptor) is an active-site residue. Y387 carries the post-translational modification Phosphotyrosine; by autocatalysis.

The protein belongs to the protein kinase superfamily. Tyr protein kinase family. SRC subfamily. In terms of assembly, interacts (via the SH3-domain) with PTEN. Interacts with RB1. As to expression, predominantly expressed in epithelial derived cell lines and tissues, especially normal liver, kidney, breast and colon.

The protein localises to the cytoplasm. It localises to the nucleus. The enzyme catalyses L-tyrosyl-[protein] + ATP = O-phospho-L-tyrosyl-[protein] + ADP + H(+). In terms of biological role, non-receptor tyrosine-protein kinase that negatively regulates cell proliferation. Positively regulates PTEN protein stability through phosphorylation of PTEN on 'Tyr-336', which in turn prevents its ubiquitination and degradation, possibly by reducing its binding to NEDD4. May function as a tumor suppressor. This is Tyrosine-protein kinase FRK (FRK) from Homo sapiens (Human).